We begin with the raw amino-acid sequence, 354 residues long: Uroporphyrinogen decarboxylase (354 aa).

Residues 27–31 (RQAGR), phenylalanine 46, aspartate 77, tyrosine 154, serine 209, and histidine 327 each bind substrate.

This sequence belongs to the uroporphyrinogen decarboxylase family. As to quaternary structure, homodimer.

It localises to the cytoplasm. It catalyses the reaction uroporphyrinogen III + 4 H(+) = coproporphyrinogen III + 4 CO2. It functions in the pathway porphyrin-containing compound metabolism; protoporphyrin-IX biosynthesis; coproporphyrinogen-III from 5-aminolevulinate: step 4/4. Catalyzes the decarboxylation of four acetate groups of uroporphyrinogen-III to yield coproporphyrinogen-III. This chain is Uroporphyrinogen decarboxylase, found in Shewanella oneidensis (strain ATCC 700550 / JCM 31522 / CIP 106686 / LMG 19005 / NCIMB 14063 / MR-1).